Consider the following 81-residue polypeptide: Small ribosomal subunit protein uS17 (81 aa).

Belongs to the universal ribosomal protein uS17 family. As to quaternary structure, part of the 30S ribosomal subunit.

One of the primary rRNA binding proteins, it binds specifically to the 5'-end of 16S ribosomal RNA. This chain is Small ribosomal subunit protein uS17, found in Trichormus variabilis (strain ATCC 29413 / PCC 7937) (Anabaena variabilis).